The primary structure comprises 67 residues: Large ribosomal subunit protein bL35 (67 aa).

It belongs to the bacterial ribosomal protein bL35 family.

The sequence is that of Large ribosomal subunit protein bL35 from Sphingopyxis alaskensis (strain DSM 13593 / LMG 18877 / RB2256) (Sphingomonas alaskensis).